Here is a 312-residue protein sequence, read N- to C-terminus: Malate dehydrogenase (312 aa).

Residues 12–17 (GAGFTG) and Asp36 contribute to the NAD(+) site. Substrate is bound by residues Arg87 and Arg93. Residues Asn100 and 123-125 (LTN) each bind NAD(+). Substrate is bound at residue Asn125. At Ser149 the chain carries Phosphoserine. Arg156 contributes to the substrate binding site. His180 (proton acceptor) is an active-site residue.

This sequence belongs to the LDH/MDH superfamily. MDH type 3 family.

The catalysed reaction is (S)-malate + NAD(+) = oxaloacetate + NADH + H(+). In terms of biological role, catalyzes the reversible oxidation of malate to oxaloacetate. This chain is Malate dehydrogenase, found in Bacillus mycoides (strain KBAB4) (Bacillus weihenstephanensis).